Reading from the N-terminus, the 266-residue chain is Putative tyrosine phosphatase 197R (266 aa).

Positions 15–167 (RPTLGSLSDK…LFGSQNINND (153 aa)) constitute a Tyrosine-protein phosphatase domain. Cysteine 111 (phosphocysteine intermediate) is an active-site residue.

Belongs to the protein-tyrosine phosphatase family.

The catalysed reaction is O-phospho-L-tyrosyl-[protein] + H2O = L-tyrosyl-[protein] + phosphate. The polypeptide is Putative tyrosine phosphatase 197R (Invertebrate iridescent virus 6 (IIV-6)).